A 238-amino-acid polypeptide reads, in one-letter code: Large ribosomal subunit protein uL2 (238 aa).

The interval 203–223 (GGGAWKHPGKPTTVSRNAPPG) is disordered.

This sequence belongs to the universal ribosomal protein uL2 family. Part of the 50S ribosomal subunit. Forms a bridge to the 30S subunit in the 70S ribosome.

In terms of biological role, one of the primary rRNA binding proteins. Required for association of the 30S and 50S subunits to form the 70S ribosome, for tRNA binding and peptide bond formation. It has been suggested to have peptidyltransferase activity; this is somewhat controversial. Makes several contacts with the 16S rRNA in the 70S ribosome. The chain is Large ribosomal subunit protein uL2 from Methanosarcina barkeri (strain Fusaro / DSM 804).